Reading from the N-terminus, the 456-residue chain is Probable serine/threonine-protein kinase DDB_G0277449 (456 aa).

Over residues 50 to 83 the composition is skewed to low complexity; the sequence is STSPTECEESSSSTITTPSEESLSSGEESSSISD. The disordered stretch occupies residues 50–84; the sequence is STSPTECEESSSSTITTPSEESLSSGEESSSISDS. One can recognise a Protein kinase domain in the interval 128–383; the sequence is FIIKHLVGKG…AIEIKRHPFF (256 aa). Residues 134-142 and lysine 157 each bind ATP; that span reads VGKGGFGKV. Aspartate 251 serves as the catalytic Proton acceptor. The AGC-kinase C-terminal domain occupies 384–455; that stretch reads KSIQWRKIEN…VRTPVLLESQ (72 aa).

It belongs to the protein kinase superfamily. AGC Ser/Thr protein kinase family.

It carries out the reaction L-seryl-[protein] + ATP = O-phospho-L-seryl-[protein] + ADP + H(+). It catalyses the reaction L-threonyl-[protein] + ATP = O-phospho-L-threonyl-[protein] + ADP + H(+). In Dictyostelium discoideum (Social amoeba), this protein is Probable serine/threonine-protein kinase DDB_G0277449.